The sequence spans 338 residues: S-adenosylmethionine:tRNA ribosyltransferase-isomerase (338 aa).

Belongs to the QueA family. In terms of assembly, monomer.

The protein localises to the cytoplasm. The catalysed reaction is 7-aminomethyl-7-carbaguanosine(34) in tRNA + S-adenosyl-L-methionine = epoxyqueuosine(34) in tRNA + adenine + L-methionine + 2 H(+). It functions in the pathway tRNA modification; tRNA-queuosine biosynthesis. Its function is as follows. Transfers and isomerizes the ribose moiety from AdoMet to the 7-aminomethyl group of 7-deazaguanine (preQ1-tRNA) to give epoxyqueuosine (oQ-tRNA). The polypeptide is S-adenosylmethionine:tRNA ribosyltransferase-isomerase (Francisella tularensis subsp. novicida (strain U112)).